The sequence spans 86 residues: Cardiotoxin homolog TA-ctx-like (86 aa).

A signal peptide spans 1–21 (MKTLLLTLVVLTIACLDLGYT). Intrachain disulfides connect Cys24/Cys45, Cys38/Cys62, Cys66/Cys78, and Cys79/Cys84.

The protein belongs to the three-finger toxin family. Short-chain subfamily. Orphan group IX sub-subfamily. In terms of tissue distribution, expressed by the venom gland.

Its subcellular location is the secreted. The chain is Cardiotoxin homolog TA-ctx-like from Bungarus multicinctus (Many-banded krait).